Reading from the N-terminus, the 393-residue chain is Interleukin-1 receptor type 2 (393 aa).

The N-terminal stretch at 1-13 (MFRLYVLVMGVSA) is a signal peptide. Over 14 to 347 (FTLQPAAHTG…RTTVKEPPPT (334 aa)) the chain is Extracellular. Intrachain disulfides connect C28–C116, C50–C108, and C152–C207. Ig-like C2-type domains follow at residues 29–120 (PVRG…DKVS), 134–221 (PFIS…YNIT), and 237–342 (PVII…TTVK). N-linked (GlcNAc...) asparagine glycans are attached at residues N66, N72, and N112. 2 N-linked (GlcNAc...) asparagine glycosylation sites follow: N219 and N277. An intrachain disulfide couples C258 to C326. A helical membrane pass occupies residues 348 to 368 (FSWGIVLAPLALAFLVLGGIW). The Cytoplasmic segment spans residues 369–393 (MHRRCKHRTGKADGLTVLRPHHQDF).

This sequence belongs to the interleukin-1 receptor family. In terms of assembly, forms a non-signaling receptor complex consisting of IL1R2 and IL1RAP. Post-translationally, a soluble form (sIL1R2) can also be produced by proteolytic cleavage at the cell surface (shedding) involving a metalloproteinase.

It is found in the secreted. Its subcellular location is the cell membrane. Non-signaling receptor for IL1A, IL1B and IL1RN. Reduces IL1B activities. Serves as a decoy receptor by competitive binding to IL1B and preventing its binding to IL1R1. Also modulates cellular response through non-signaling association with IL1RAP after binding to IL1B. IL1R2 (membrane and secreted forms) preferentially binds IL1B and poorly IL1A and IL1RN. The secreted IL1R2 recruits secreted IL1RAP with high affinity; this complex formation may be the dominant mechanism for neutralization of IL1B by secreted/soluble receptors. The polypeptide is Interleukin-1 receptor type 2 (IL1R2) (Chlorocebus aethiops (Green monkey)).